Reading from the N-terminus, the 409-residue chain is 5-aminolevulinate synthase (409 aa).

Arg21 and Ser136 together coordinate substrate. The pyridoxal 5'-phosphate site is built by Ser188, His216, and Thr244. Residue Lys247 is part of the active site. Lys247 carries the post-translational modification N6-(pyridoxal phosphate)lysine. Residues Thr276 and Thr277 each contribute to the pyridoxal 5'-phosphate site. Thr362 lines the substrate pocket.

Belongs to the class-II pyridoxal-phosphate-dependent aminotransferase family. As to quaternary structure, homodimer. Requires pyridoxal 5'-phosphate as cofactor.

It carries out the reaction succinyl-CoA + glycine + H(+) = 5-aminolevulinate + CO2 + CoA. It participates in porphyrin-containing compound metabolism; protoporphyrin-IX biosynthesis; 5-aminolevulinate from glycine: step 1/1. In Bradyrhizobium diazoefficiens (strain JCM 10833 / BCRC 13528 / IAM 13628 / NBRC 14792 / USDA 110), this protein is 5-aminolevulinate synthase (hemA).